The chain runs to 394 residues: GDSL esterase/lipase At2g27360 (394 aa).

A signal peptide spans 1–24 (MASQDCHMLLSFFISTFLITVVTS). The Nucleophile role is filled by Ser-40. N-linked (GlcNAc...) asparagine glycosylation is found at Asn-136 and Asn-319. Active-site residues include Asp-344 and His-347. N-linked (GlcNAc...) asparagine glycosylation is found at Asn-371 and Asn-382.

This sequence belongs to the 'GDSL' lipolytic enzyme family.

Its subcellular location is the secreted. The sequence is that of GDSL esterase/lipase At2g27360 from Arabidopsis thaliana (Mouse-ear cress).